We begin with the raw amino-acid sequence, 922 residues long: Cell cycle and apoptosis regulator protein 2 (922 aa).

The disordered stretch occupies residues 1–39 (MSQFKRQRINPLPGGRNFSGAASTSLLGPPPGLLTPPVA). Residue threonine 35 is modified to Phosphothreonine. N6-acetyllysine; by KAT8 is present on lysine 112. Lysine 123 is subject to N6-methyllysine. At serine 124 the chain carries Phosphoserine. Disordered stretches follow at residues 178 to 219 (LNRF…KPRH), 280 to 307 (RIQVSSEKEAAPDTGAEPSPEDSDPTYS), 446 to 508 (KATE…EPAV), and 567 to 638 (VSPP…RGEA). The residue at position 180 (arginine 180) is an Omega-N-methylarginine. The segment covering 188–200 (GRLDQGRSDDYDS) has biased composition (basic and acidic residues). Lysine 215 is modified (N6-acetyllysine; by KAT8). Positions 473 to 491 (QADTSKQNTETMEATTQQD) are enriched in polar residues. Threonine 483 carries the post-translational modification Phosphothreonine. Serine 568 is subject to Phosphoserine. A compositionally biased stretch (basic and acidic residues) spans 571-601 (EPEKEEAAKEDAVKEEEAVKEEAVKVSKDEV). Residues 573 to 596 (EKEEAAKEDAVKEEEAVKEEAVKV) are a coiled coil. A Glycyl lysine isopeptide (Lys-Gly) (interchain with G-Cter in SUMO2 and SUMO3); alternate cross-link involves residue lysine 590. Lysine 590 is covalently cross-linked (Glycyl lysine isopeptide (Lys-Gly) (interchain with G-Cter in SUMO2); alternate). Residues 609–669 (ESDSPLKEDG…DEFAGAKLEE (61 aa)) are interaction with MCC. Residues serine 612, serine 626, serine 674, serine 677, and serine 680 each carry the phosphoserine modification. The residue at position 684 (tyrosine 684) is a Phosphotyrosine. 2 positions are modified to phosphoserine: serine 686 and serine 807. Residues 703–922 (DCLLAFVFFD…VEKEEPTPSN (220 aa)) are interaction with NR1D1. A coiled-coil region spans residues 828-898 (LENKIHTLEL…QDFRRRLTPL (71 aa)). At threonine 896 the chain carries Phosphothreonine.

In terms of assembly, component of the DBIRD complex. Interacts with ZNF326/ZIRD; the interaction is direct. Interacts (via N-terminus) with SIRT1, which inhibits the deacetylation of substrates. Interacts (via N-terminus) with SUV39H1; this interaction abolishes the interaction with SIRT1. Component of a nuclear receptor-mediated transcription complex composed of at least ZNF335, CCAR2 and EMSY; the complex stimulates the transcription of nuclear receptor target genes such as SOX9 and HOXA1. Within the complex interacts with EMSY and interacts with ZNF335 (via C-terminus). Components of this complex may associate with components of a histone methylation complex to form a complex at least composed of ZNF335, HCFC1, CCAR2, EMSY, MKI67, RBBP5, ASH2L and WDR5. Within this complex, interacts with ASH2L. Interacts with NR1D1. Interacts (via N-terminus) with ESR1 and ESR2. Interacts (via N-terminus) with HDAC3 (via C-terminus). Interacts with HDAC1 and MED2F. Interacts with MCC. Interacts (via N-terminus) with NR1H2 and NR1H3 in a ligand-independent manner. Interacts with CSNK2A1. Interacts (via N-terminus) with p53/TP53. Interacts (via N-terminus) with BRCA1 (via the BRCT domains). Interacts (via N-terminus) with CHEK2 (via protein kinase domain). Interacts with PSEM3. Interacts (via N-terminus) with PSIA3 and SENP1. The sumoylated form shows a preferential interaction with SIRT1 as compared to its unmodified form. Interacts with CECR2; may form part of the CERF-1 and/or CEF-5 ISWI chromatin remodeling complexes in embryonic stem cells. Post-translationally, acetylation at Lys-112 and Lys-215 by KAT8 prevents inhibitory binding to SIRT1 and increases its deacetylase activity. Genotoxic stress induces its sumoylation and sumoylation promotes the SIRT1-CCAR2 interaction which in turn inhibits SIRT1-mediated deacetylation of p53/TP53. Sumoylation leads to transcriptional activation of p53/TP53 by sequestering SIRT1 from p53/TP53. Desumoylated by SENP1.

It is found in the nucleus. The protein resides in the cytoplasm. It localises to the cytoskeleton. The protein localises to the spindle. Core component of the DBIRD complex, a multiprotein complex that acts at the interface between core mRNP particles and RNA polymerase II (RNAPII) and integrates transcript elongation with the regulation of alternative splicing: the DBIRD complex affects local transcript elongation rates and alternative splicing of a large set of exons embedded in (A + T)-rich DNA regions. Inhibits SIRT1 deacetylase activity leading to increasing levels of p53/TP53 acetylation and p53-mediated apoptosis. Inhibits SUV39H1 methyltransferase activity. Mediates ligand-dependent transcriptional activation by nuclear hormone receptors. Plays a critical role in maintaining genomic stability and cellular integrity following UV-induced genotoxic stress. Regulates the circadian expression of the core clock components NR1D1 and BMAL1. Enhances the transcriptional repressor activity of NR1D1 through stabilization of NR1D1 protein levels by preventing its ubiquitination and subsequent degradation. Represses the ligand-dependent transcriptional activation function of ESR2. Acts as a regulator of PCK1 expression and gluconeogenesis by a mechanism that involves, at least in part, both NR1D1 and SIRT1. Negatively regulates the deacetylase activity of HDAC3 and can alter its subcellular localization. Positively regulates the beta-catenin pathway (canonical Wnt signaling pathway) and is required for MCC-mediated repression of the beta-catenin pathway. Represses ligand-dependent transcriptional activation function of NR1H2 and NR1H3 and inhibits the interaction of SIRT1 with NR1H3. Plays an important role in tumor suppression through p53/TP53 regulation; stabilizes p53/TP53 by affecting its interaction with ubiquitin ligase MDM2. Represses the transcriptional activator activity of BRCA1. Inhibits SIRT1 in a CHEK2 and PSEM3-dependent manner and inhibits the activity of CHEK2 in vitro. The chain is Cell cycle and apoptosis regulator protein 2 (Ccar2) from Mus musculus (Mouse).